Reading from the N-terminus, the 423-residue chain is Core protease OPG082 (423 aa).

Residues histidine 241, aspartate 248, and cysteine 328 contribute to the active site.

Belongs to the peptidase C57 family.

It localises to the virion. Its function is as follows. Late protein responsible for processing most or all of the viral core and membrane proteins known to undergo morphogenesis-associated proteolysis. These proteolytic events are involved in the transformation of immature virions (IV) into mature virions (MV). Probably cleaves at least the OPG129, OPG136, OPG098, and OPG144 precursors preferentially at Ala-Gly-|-Ala motifs. Also seems to process Ala-Gly-|-Ser and Ala-Gly-|-Thr motifs. In Homo sapiens (Human), this protein is Core protease OPG082 (OPG083).